The chain runs to 306 residues: Prophage bactoprenol glucosyl transferase homolog (306 aa).

The Cytoplasmic segment spans residues 1–227; sequence MKISLVVPVF…ITSFSTFPLR (227 aa). Residues 228–248 traverse the membrane as a helical segment; the sequence is IWTYIGLVVASVAFIYGAWMI. Residues 249–262 lie on the Periplasmic side of the membrane; that stretch reads LDTIIFGNAVRGYP. Residues 263–283 form a helical membrane-spanning segment; sequence SLLVSILFLGGIQMIGIGVLG. Over 284–306 the chain is Cytoplasmic; sequence EYIGRTYIETKKRPKYIIKRVKK.

Belongs to the glycosyltransferase 2 family. GtrB subfamily.

It localises to the cell inner membrane. Its function is as follows. Involved in O antigen modification. Catalyzes the transfer of the glucose residue from UDP-glucose to a lipid carrier. The protein is Prophage bactoprenol glucosyl transferase homolog (yfdH) of Escherichia coli (strain K12).